The following is a 745-amino-acid chain: Pentatricopeptide repeat-containing protein At1g71420 (745 aa).

PPR repeat units lie at residues 58-88 (SQQAYAALFQACAEQRNLLDGINLHHHMLSH), 95-125 (NVILANFLINMYAKCGNILYARQVFDTMPER), 126-160 (NVVSWTALITGYVQAGNEQEGFCLFSSMLSHCFPN), 191-224 (SIYVANAVISMYGRCHDGAAAYEAWTVFEAIKFK), 225-259 (NLVTWNSMIAAFQCCNLGKKAIGVFMRMHSDGVGF), 260-296 (DRATLLNICSSLYKSSDLVPNEVSKCCLQLHSLTVKS), 301-332 (QTEVATALIKVYSEMLEDYTDCYKLFMEMSHC), 334-367 (DIVAWNGIITAFAVYDPERAIHLFGQLRQEKLSP), 368-402 (DWYTFSSVLKACAGLVTARHALSIHAQVIKGGFLA), 403-437 (DTVLNNSLIHAYAKCGSLDLCMRVFDDMDSRDVVS), 438-464 (WNSMLKAYSLHGQVDSILPVFQKMDIN), 466-496 (DSATFIALLSACSHAGRVEEGLRIFRSMFEK), and 502-532 (QLNHYACVIDMLSRAERFAEAEEVIKQMPMD). Residues 537 to 613 (VWIALLGSCR…EPDLSWTEIG (77 aa)) are type E motif. The tract at residues 614–644 (NKVHEFASGGRHRPDKEAVYRELKRLISWLK) is type E(+) motif. Residues 645-745 (EMGYVPEMRS…DSSCSCNDYW (101 aa)) are type DYW motif.

This sequence belongs to the PPR family. PCMP-H subfamily.

The chain is Pentatricopeptide repeat-containing protein At1g71420 (PCMP-H70) from Arabidopsis thaliana (Mouse-ear cress).